We begin with the raw amino-acid sequence, 444 residues long: Tubulin beta chain (444 aa).

Residues Q11, E68, S137, G141, T142, G143, N203, and N225 each coordinate GTP. E68 is a Mg(2+) binding site. Positions 424–444 (QDATAEEEGEFDEDEEMDEMM) are disordered. Residues 427–444 (TAEEEGEFDEDEEMDEMM) are compositionally biased toward acidic residues.

It belongs to the tubulin family. As to quaternary structure, dimer of alpha and beta chains. A typical microtubule is a hollow water-filled tube with an outer diameter of 25 nm and an inner diameter of 15 nM. Alpha-beta heterodimers associate head-to-tail to form protofilaments running lengthwise along the microtubule wall with the beta-tubulin subunit facing the microtubule plus end conferring a structural polarity. Microtubules usually have 13 protofilaments but different protofilament numbers can be found in some organisms and specialized cells. The cofactor is Mg(2+).

The protein localises to the cytoplasm. Its subcellular location is the cytoskeleton. Its function is as follows. Tubulin is the major constituent of microtubules, a cylinder consisting of laterally associated linear protofilaments composed of alpha- and beta-tubulin heterodimers. Microtubules grow by the addition of GTP-tubulin dimers to the microtubule end, where a stabilizing cap forms. Below the cap, tubulin dimers are in GDP-bound state, owing to GTPase activity of alpha-tubulin. The chain is Tubulin beta chain from Achlya klebsiana.